The sequence spans 602 residues: Aspartate--tRNA(Asp/Asn) ligase (602 aa).

Glutamate 175 lines the L-aspartate pocket. Positions 199–202 (QIFK) are aspartate. Arginine 221 is a binding site for L-aspartate. Residues 221 to 223 (RDE) and glutamine 230 contribute to the ATP site. Histidine 458 is an L-aspartate binding site. Glutamate 492 serves as a coordination point for ATP. Arginine 499 lines the L-aspartate pocket. ATP is bound at residue 544–547 (GLDR).

It belongs to the class-II aminoacyl-tRNA synthetase family. Type 1 subfamily. In terms of assembly, homodimer.

The protein localises to the cytoplasm. The enzyme catalyses tRNA(Asx) + L-aspartate + ATP = L-aspartyl-tRNA(Asx) + AMP + diphosphate. Functionally, aspartyl-tRNA synthetase with relaxed tRNA specificity since it is able to aspartylate not only its cognate tRNA(Asp) but also tRNA(Asn). Reaction proceeds in two steps: L-aspartate is first activated by ATP to form Asp-AMP and then transferred to the acceptor end of tRNA(Asp/Asn). This chain is Aspartate--tRNA(Asp/Asn) ligase, found in Cupriavidus pinatubonensis (strain JMP 134 / LMG 1197) (Cupriavidus necator (strain JMP 134)).